The sequence spans 460 residues: UDP-N-acetylmuramoylalanine--D-glutamate ligase (460 aa).

An ATP-binding site is contributed by 122 to 128 (GSNGKST).

This sequence belongs to the MurCDEF family.

The protein localises to the cytoplasm. It carries out the reaction UDP-N-acetyl-alpha-D-muramoyl-L-alanine + D-glutamate + ATP = UDP-N-acetyl-alpha-D-muramoyl-L-alanyl-D-glutamate + ADP + phosphate + H(+). Its pathway is cell wall biogenesis; peptidoglycan biosynthesis. Its function is as follows. Cell wall formation. Catalyzes the addition of glutamate to the nucleotide precursor UDP-N-acetylmuramoyl-L-alanine (UMA). The protein is UDP-N-acetylmuramoylalanine--D-glutamate ligase of Jannaschia sp. (strain CCS1).